Here is a 610-residue protein sequence, read N- to C-terminus: Prolactin receptor (610 aa).

An N-terminal signal peptide occupies residues 1 to 19 (MPSALAFVLLVLNISLLKG). The Extracellular segment spans residues 20-229 (QSPPGKPEIH…EMPNDFTLKD (210 aa)). 2 Fibronectin type-III domains span residues 22 to 122 (PPGK…IVEP) and 124 to 224 (PPRN…MPND). C31 and C41 are oxidised to a cystine. An N-linked (GlcNAc...) asparagine glycan is attached at N54. A disulfide bond links C70 and C81. 2 N-linked (GlcNAc...) asparagine glycosylation sites follow: N99 and N127. The Zn(2+) site is built by D206 and H207. Positions 210–214 (WSRWS) match the WSXWS motif motif. Residues 230–253 (TTVWIIVAILSAVICLIMVWAVAL) traverse the membrane as a helical segment. Residues 254–610 (KGYSMMTCIF…DPTCFMHSFH (357 aa)) are Cytoplasmic-facing. The Box 1 motif signature appears at 262 to 270 (IFPPVPGPK). 3 disordered regions span residues 317–355 (DERLMPSHSKEYPGQGVKPTHLDPDSDSGHGSYDSHSLL), 458–482 (TGEEEVAEQKGAKSFPSDKQNTPWP), and 564–584 (AKKAPPSFEADQSEKDLASFT). Basic and acidic residues predominate over residues 318 to 327 (ERLMPSHSKE). A compositionally biased stretch (low complexity) spans 345–354 (GHGSYDSHSL).

Belongs to the type I cytokine receptor family. Type 1 subfamily. Interacts with SMARCA1. Interacts with NEK3 and VAV2 and this interaction is prolactin-dependent.

It is found in the membrane. Its function is as follows. This is a receptor for the anterior pituitary hormone prolactin. In Rattus norvegicus (Rat), this protein is Prolactin receptor (Prlr).